Here is a 204-residue protein sequence, read N- to C-terminus: UPF0637 protein SA0957 (204 aa).

It belongs to the UPF0637 family.

The sequence is that of UPF0637 protein SA0957 from Staphylococcus aureus (strain N315).